Consider the following 272-residue polypeptide: Large ribosomal subunit protein uL3 (272 aa).

The interval 125–146 is disordered; the sequence is QHIGPKSHGGGGGSQPLRQTGS.

It belongs to the universal ribosomal protein uL3 family. Part of the 50S ribosomal subunit. Forms a cluster with proteins L14 and L19.

One of the primary rRNA binding proteins, it binds directly near the 3'-end of the 23S rRNA, where it nucleates assembly of the 50S subunit. The chain is Large ribosomal subunit protein uL3 from Metamycoplasma arthritidis (strain 158L3-1) (Mycoplasma arthritidis).